The chain runs to 484 residues: AMP nucleosidase (484 aa).

The protein belongs to the AMP nucleosidase family.

The catalysed reaction is AMP + H2O = adenine + D-ribose 5-phosphate. Catalyzes the hydrolysis of the N-glycosidic bond of AMP to form adenine and ribose 5-phosphate. Involved in regulation of AMP concentrations. This is AMP nucleosidase from Escherichia coli O157:H7.